The following is a 339-amino-acid chain: DNA-directed RNA polymerase subunit alpha (339 aa).

Residues Met1–Glu233 are alpha N-terminal domain (alpha-NTD). Residues Lys264–Phe339 are alpha C-terminal domain (alpha-CTD).

The protein belongs to the RNA polymerase alpha chain family. In plastids the minimal PEP RNA polymerase catalytic core is composed of four subunits: alpha, beta, beta', and beta''. When a (nuclear-encoded) sigma factor is associated with the core the holoenzyme is formed, which can initiate transcription.

Its subcellular location is the plastid. It is found in the chloroplast. It carries out the reaction RNA(n) + a ribonucleoside 5'-triphosphate = RNA(n+1) + diphosphate. In terms of biological role, DNA-dependent RNA polymerase catalyzes the transcription of DNA into RNA using the four ribonucleoside triphosphates as substrates. In Crithopsis delileana, this protein is DNA-directed RNA polymerase subunit alpha.